The sequence spans 108 residues: UPF0145 protein Fnod_0426 (108 aa).

It belongs to the UPF0145 family.

The chain is UPF0145 protein Fnod_0426 from Fervidobacterium nodosum (strain ATCC 35602 / DSM 5306 / Rt17-B1).